Reading from the N-terminus, the 360-residue chain is Hyaluronan and proteoglycan link protein 3 (360 aa).

The N-terminal stretch at 1–17 (MGLLLLVPLLLLPGSYG) is a signal peptide. One can recognise an Ig-like V-type domain in the interval 48–164 (KLVVETPEET…ESGLVELELR (117 aa)). Intrachain disulfides connect Cys-70/Cys-146, Cys-188/Cys-259, Cys-212/Cys-233, Cys-286/Cys-356, and Cys-311/Cys-332. Link domains lie at 166–261 (VVFP…FCFA) and 266–358 (GRVY…YCYR).

Belongs to the HAPLN family. As to expression, widely expressed with highest levels in spleen and placenta.

Its subcellular location is the secreted. It is found in the extracellular space. It localises to the extracellular matrix. May function in hyaluronic acid binding. This Homo sapiens (Human) protein is Hyaluronan and proteoglycan link protein 3 (HAPLN3).